The primary structure comprises 151 residues: Flavodoxin YqcA (151 aa).

One can recognise a Flavodoxin-like domain in the interval 4-145 (IGIFVGTVYG…ISCPWVEAWA (142 aa)). FMN is bound by residues 10–15 (TVYGNA) and 99–101 (NFC).

The protein belongs to the flavodoxin family. MioC subfamily. In terms of assembly, monomer. The cofactor is FMN.

In terms of biological role, probable electron transporter. This Pectobacterium carotovorum subsp. carotovorum (Erwinia carotovora subsp. carotovora) protein is Flavodoxin YqcA.